We begin with the raw amino-acid sequence, 45 residues long: uncharacterized protein (45 aa).

Residues 1-19 (MTFQILFLFVFHFVYIFRA) form the signal peptide.

This is an uncharacterized protein from Saccharomyces cerevisiae (strain ATCC 204508 / S288c) (Baker's yeast).